The chain runs to 308 residues: uncharacterized protein (308 aa).

The S4 RNA-binding domain occupies 15-81; that stretch reads MRVDTGLARL…QNTPIDIEGM (67 aa). Residue aspartate 139 is part of the active site.

The protein belongs to the pseudouridine synthase RluA family.

It catalyses the reaction a uridine in RNA = a pseudouridine in RNA. This is an uncharacterized protein from Mycobacterium tuberculosis (strain CDC 1551 / Oshkosh).